The chain runs to 316 residues: Retron Ec73 putative ribosyltransferase/DNA-binding protein (316 aa).

Its function is as follows. Possible ribosyltransferase/DNA-binding component of antiviral defense system retron Ec73, composed of a non-coding RNA (ncRNA) followed by this protein then a reverse transcriptase (RT). Expression of this retron confers protection against bacteriophages SECphi4, SECphi6, SECphi27 and P1. At multiplicity of infection (MOI) of 0.02 cultures grow normally when infected with SECphi4 without collapsing, at MOI 2 cultures enter growth stasis. This Escherichia coli protein is Retron Ec73 putative ribosyltransferase/DNA-binding protein.